Consider the following 101-residue polypeptide: MRGLAVLLLVACFCSVAFGDCENTECPRACPGEYEFDEDGCNTCLCKGCNDAQCRIYCPLGFTTDANGCESFCTCNTRETVCQNVVCSGKRVCNPRSGRCE.

The N-terminal stretch at 1-19 is a signal peptide; sequence MRGLAVLLLVACFCSVAFG. Antistasin-like domains follow at residues 21-46 and 49-75; these read CENT…TCLC and CNDA…FCTC.

In terms of tissue distribution, salivary glands.

The protein localises to the secreted. Potent inhibitor of factor Xa. It also inhibits trypsin in a weaker manner. The protein is Therostasin of Theromyzon tessulatum (Duck leech).